A 214-amino-acid polypeptide reads, in one-letter code: Ribonuclease HII (214 aa).

The RNase H type-2 domain occupies 26–214 (EIVCGVDEAG…PVREAFDLIR (189 aa)). A divalent metal cation-binding residues include Asp-32, Glu-33, and Asp-124.

It belongs to the RNase HII family. Mn(2+) serves as cofactor. The cofactor is Mg(2+).

Its subcellular location is the cytoplasm. The enzyme catalyses Endonucleolytic cleavage to 5'-phosphomonoester.. Its function is as follows. Endonuclease that specifically degrades the RNA of RNA-DNA hybrids. In Burkholderia pseudomallei (strain 1710b), this protein is Ribonuclease HII.